The primary structure comprises 34 residues: Conotoxin Cl6d (34 aa).

3 disulfides stabilise this stretch: cysteine 4–cysteine 19, cysteine 12–cysteine 29, and cysteine 18–cysteine 33. 4-hydroxyproline is present on residues proline 14 and proline 21.

In terms of tissue distribution, expressed by the venom duct.

It localises to the secreted. This is Conotoxin Cl6d from Californiconus californicus (California cone).